A 318-amino-acid chain; its full sequence is Small ribosomal subunit protein RACK1 (318 aa).

7 WD repeats span residues 11–44 (GHRG…LSWG), 65–95 (GHSA…RLWN), 107–137 (GHTK…RVWN), 150–182 (AHTD…KVWD), 194–224 (GHTN…RLWD), 235–264 (AAGA…RIFD), and 282–315 (KKIV…WGVS).

Belongs to the WD repeat G protein beta family. Ribosomal protein RACK1 subfamily.

The protein is Small ribosomal subunit protein RACK1 of Trypanosoma brucei brucei.